The chain runs to 544 residues: MAKFVFITGGVVSSIGKGIVAASLGRLLKSRNYTVSILKLDPYINVDPGTMSPYQHGEVFVTDDGAETDLDLGHYERFTDTNMSKLNNVTTGAIYQAVIYKERRGDYQGSTVQVIPHVTQEIKERIRRVARETNPDVVLVEVGGTVGDIESLPFLEAIRQFRKDVGRANVAYVHVTLVPLIKAAGEMKTKPTQHSVKELRSIGIQPDVLVCRCEQPLPRSIKEKISEFCDVPVECVIQAQDAPSIYDVPLVLEQEGLAQRVLQILNLEPQQPDLREWELLVQRLHHPQEQVEIAIVGKYVRLTDAYLSVAEALRHAGLALNAGVTLRWISSEEVEERGPEALLADVDGVVVPGGFGSRGIEGKVATIRYVRERGIPFLGLCLGMQCAVIDWGCNIAGLERANSYEFDPDTPHPVISLLPEQKDVEHLGGTLRLGLYPCRILPDTLAAKLYGESIVYERHRHRYEFNNAYRSLFLESGYVISGVSPDNRLVEIIELPSHPFFIATQFHPEFRSRPNRPHPLFLGLIEAALRSRSRPQALQLQNTG.

The interval 1–267 (MAKFVFITGG…AQRVLQILNL (267 aa)) is amidoligase domain. Ser13 contacts CTP. Residue Ser13 participates in UTP binding. 14–19 (SIGKGI) contacts ATP. L-glutamine is bound at residue Tyr54. Residue Asp71 coordinates ATP. Residues Asp71 and Glu141 each coordinate Mg(2+). Residues 148 to 150 (DIE), 188 to 193 (KTKPTQ), and Lys224 contribute to the CTP site. UTP-binding positions include 188-193 (KTKPTQ) and Lys224. The Glutamine amidotransferase type-1 domain occupies 292–534 (EIAIVGKYVR…IEAALRSRSR (243 aa)). Gly354 serves as a coordination point for L-glutamine. Cys381 acts as the Nucleophile; for glutamine hydrolysis in catalysis. L-glutamine is bound by residues 382 to 385 (LGMQ), Glu405, and Arg462. Residues His507 and Glu509 contribute to the active site.

This sequence belongs to the CTP synthase family. Homotetramer.

The enzyme catalyses UTP + L-glutamine + ATP + H2O = CTP + L-glutamate + ADP + phosphate + 2 H(+). It carries out the reaction L-glutamine + H2O = L-glutamate + NH4(+). It catalyses the reaction UTP + NH4(+) + ATP = CTP + ADP + phosphate + 2 H(+). It participates in pyrimidine metabolism; CTP biosynthesis via de novo pathway; CTP from UDP: step 2/2. Its activity is regulated as follows. Allosterically activated by GTP, when glutamine is the substrate; GTP has no effect on the reaction when ammonia is the substrate. The allosteric effector GTP functions by stabilizing the protein conformation that binds the tetrahedral intermediate(s) formed during glutamine hydrolysis. Inhibited by the product CTP, via allosteric rather than competitive inhibition. Catalyzes the ATP-dependent amination of UTP to CTP with either L-glutamine or ammonia as the source of nitrogen. Regulates intracellular CTP levels through interactions with the four ribonucleotide triphosphates. This chain is CTP synthase, found in Synechococcus sp. (strain JA-3-3Ab) (Cyanobacteria bacterium Yellowstone A-Prime).